A 343-amino-acid polypeptide reads, in one-letter code: Isopentenyl-diphosphate delta-isomerase (343 aa).

9–10 is a substrate binding site; it reads RK. FMN is bound by residues Ser-66, 67–69, Ser-98, and Asn-126; that span reads SMT. 98–100 is a binding site for substrate; the sequence is SQR. Residue Gln-161 coordinates substrate. Glu-162 contributes to the Mg(2+) binding site. FMN is bound by residues Lys-193, Thr-223, 273 to 275, and 294 to 295; these read GIR and AA.

The protein belongs to the IPP isomerase type 2 family. In terms of assembly, homooctamer. Dimer of tetramers. Requires FMN as cofactor. NADPH serves as cofactor. It depends on Mg(2+) as a cofactor.

It is found in the cytoplasm. It catalyses the reaction isopentenyl diphosphate = dimethylallyl diphosphate. Involved in the biosynthesis of isoprenoids. Catalyzes the 1,3-allylic rearrangement of the homoallylic substrate isopentenyl (IPP) to its allylic isomer, dimethylallyl diphosphate (DMAPP). This is Isopentenyl-diphosphate delta-isomerase from Hydrogenovibrio crunogenus (strain DSM 25203 / XCL-2) (Thiomicrospira crunogena).